Here is a 138-residue protein sequence, read N- to C-terminus: Large ribosomal subunit protein uL16 (138 aa).

A compositionally biased stretch (basic residues) spans 1–16 (MLIPRRVKHRKQHHPS). The interval 1–25 (MLIPRRVKHRKQHHPSRSGAAKGGT) is disordered.

Belongs to the universal ribosomal protein uL16 family. Part of the 50S ribosomal subunit.

Its function is as follows. Binds 23S rRNA and is also seen to make contacts with the A and possibly P site tRNAs. The protein is Large ribosomal subunit protein uL16 of Rhodococcus erythropolis (strain PR4 / NBRC 100887).